A 313-amino-acid polypeptide reads, in one-letter code: GTPase Era (313 aa).

Residues 20–187 enclose the Era-type G domain; it reads RSGFVALIGA…MDYLAETLPE (168 aa). The tract at residues 28–35 is G1; it reads GATNAGKS. 28–35 serves as a coordination point for GTP; the sequence is GATNAGKS. The segment at 54 to 58 is G2; it reads QTTRA. The G3 stretch occupies residues 75 to 78; sequence DTPG. GTP contacts are provided by residues 75–79 and 137–140; these read DTPGI and NKVD. Residues 137–140 are G4; sequence NKVD. The interval 166–168 is G5; that stretch reads ISA. The KH type-2 domain occupies 218 to 295; it reads LHQELPYASH…HLFLFVKVRE (78 aa).

Belongs to the TRAFAC class TrmE-Era-EngA-EngB-Septin-like GTPase superfamily. Era GTPase family. As to quaternary structure, monomer.

It localises to the cytoplasm. The protein resides in the cell inner membrane. Functionally, an essential GTPase that binds both GDP and GTP, with rapid nucleotide exchange. Plays a role in 16S rRNA processing and 30S ribosomal subunit biogenesis and possibly also in cell cycle regulation and energy metabolism. The chain is GTPase Era from Rhizobium meliloti (strain 1021) (Ensifer meliloti).